The primary structure comprises 199 residues: NAD(P)H dehydrogenase (quinone) (199 aa).

The 187-residue stretch at 4–190 (VLVLYYSAYG…AGARYQGKTI (187 aa)) folds into the Flavodoxin-like domain. FMN-binding positions include 10-15 (SAYGHI) and 78-80 (TRF). Y12 serves as a coordination point for NAD(+). W98 serves as a coordination point for substrate. FMN contacts are provided by residues 113–119 (STATQHG) and H134.

It belongs to the WrbA family. It depends on FMN as a cofactor.

The enzyme catalyses a quinone + NADH + H(+) = a quinol + NAD(+). It catalyses the reaction a quinone + NADPH + H(+) = a quinol + NADP(+). In Rhodopseudomonas palustris (strain HaA2), this protein is NAD(P)H dehydrogenase (quinone).